A 365-amino-acid chain; its full sequence is Phospho-N-acetylmuramoyl-pentapeptide-transferase (365 aa).

The next 10 membrane-spanning stretches (helical) occupy residues 22–42, 74–94, 95–115, 133–153, 168–188, 201–221, 240–260, 267–287, 292–312, and 342–362; these read YISV…LALG, TMGG…WGDL, TSIY…IGFF, YKFA…FYLL, SLYI…IING, GLAI…AYIE, LAEV…FLWF, VFMG…IAVM, LIFF…MLQV, and KVVI…LAAI.

It belongs to the glycosyltransferase 4 family. MraY subfamily. Mg(2+) serves as cofactor.

Its subcellular location is the cell inner membrane. The catalysed reaction is UDP-N-acetyl-alpha-D-muramoyl-L-alanyl-gamma-D-glutamyl-meso-2,6-diaminopimeloyl-D-alanyl-D-alanine + di-trans,octa-cis-undecaprenyl phosphate = di-trans,octa-cis-undecaprenyl diphospho-N-acetyl-alpha-D-muramoyl-L-alanyl-D-glutamyl-meso-2,6-diaminopimeloyl-D-alanyl-D-alanine + UMP. It functions in the pathway cell wall biogenesis; peptidoglycan biosynthesis. In terms of biological role, catalyzes the initial step of the lipid cycle reactions in the biosynthesis of the cell wall peptidoglycan: transfers peptidoglycan precursor phospho-MurNAc-pentapeptide from UDP-MurNAc-pentapeptide onto the lipid carrier undecaprenyl phosphate, yielding undecaprenyl-pyrophosphoryl-MurNAc-pentapeptide, known as lipid I. The chain is Phospho-N-acetylmuramoyl-pentapeptide-transferase from Francisella tularensis subsp. tularensis (strain FSC 198).